A 191-amino-acid chain; its full sequence is Peptidyl-tRNA hydrolase (191 aa).

Position 17 (tyrosine 17) interacts with tRNA. Histidine 22 acts as the Proton acceptor in catalysis. TRNA is bound by residues tyrosine 68, asparagine 70, and asparagine 116.

It belongs to the PTH family. As to quaternary structure, monomer.

The protein localises to the cytoplasm. The enzyme catalyses an N-acyl-L-alpha-aminoacyl-tRNA + H2O = an N-acyl-L-amino acid + a tRNA + H(+). Functionally, hydrolyzes ribosome-free peptidyl-tRNAs (with 1 or more amino acids incorporated), which drop off the ribosome during protein synthesis, or as a result of ribosome stalling. Catalyzes the release of premature peptidyl moieties from peptidyl-tRNA molecules trapped in stalled 50S ribosomal subunits, and thus maintains levels of free tRNAs and 50S ribosomes. The protein is Peptidyl-tRNA hydrolase of Mycobacterium avium (strain 104).